A 299-amino-acid polypeptide reads, in one-letter code: Protein LacX, plasmid (299 aa).

The polypeptide is Protein LacX, plasmid (lacX) (Lactococcus lactis subsp. lactis (Streptococcus lactis)).